We begin with the raw amino-acid sequence, 549 residues long: Cation/acetate symporter ActP (549 aa).

The next 13 membrane-spanning stretches (helical) occupy residues 33-53, 76-96, 103-123, 149-169, 183-203, 206-226, 262-282, 303-323, 355-375, 404-424, 428-448, 463-483, and 493-513; these read WQAI…TYWA, GLAI…SALV, GLIY…LIAE, LSAC…MVGA, IAVV…GMLA, WVQI…AFMV, ISAL…PHIL, GFMG…IMLV, LFLG…VAGL, VSKI…ILFE, IAFM…PIIL, IGGW…PTIW, and IFPY…GIWF.

It belongs to the sodium:solute symporter (SSF) (TC 2.A.21) family.

Its subcellular location is the cell inner membrane. Functionally, transports acetate. This is Cation/acetate symporter ActP from Enterobacter sp. (strain 638).